The sequence spans 590 residues: DNA primase (590 aa).

The segment at 37-61 (CPFHKEKTPSFSVSPTKQFYHCFSC) adopts a CHC2-type zinc-finger fold. The Toprim domain occupies 255–337 (GRILVVEGYM…DKSLHFLFLP (83 aa)). Mg(2+)-binding residues include Glu261, Asp305, and Asp307.

This sequence belongs to the DnaG primase family. As to quaternary structure, monomer. Interacts with DnaB. It depends on Zn(2+) as a cofactor. Requires Mg(2+) as cofactor.

It catalyses the reaction ssDNA + n NTP = ssDNA/pppN(pN)n-1 hybrid + (n-1) diphosphate.. Functionally, RNA polymerase that catalyzes the synthesis of short RNA molecules used as primers for DNA polymerase during DNA replication. The chain is DNA primase from Neisseria meningitidis serogroup A / serotype 4A (strain DSM 15465 / Z2491).